Reading from the N-terminus, the 865-residue chain is Catenin alpha-2 (865 aa).

Over residues 823-839 (PEKKPLVKREKPEECQT) the composition is skewed to basic and acidic residues. Residues 823 to 851 (PEKKPLVKREKPEECQTRVRRGSQKKHIS) form a disordered region. The segment covering 840–850 (RVRRGSQKKHI) has biased composition (basic residues).

It belongs to the vinculin/alpha-catenin family.

It localises to the cell membrane. The protein resides in the cytoplasm. Its subcellular location is the cytoskeleton. It is found in the cell junction. The protein localises to the adherens junction. It localises to the cell projection. The protein resides in the axon. Its subcellular location is the nucleus. May function as a linker between cadherin adhesion receptors and the cytoskeleton to regulate cell-cell adhesion and differentiation in the nervous system. In Danio rerio (Zebrafish), this protein is Catenin alpha-2 (Ctnna2).